The following is a 431-amino-acid chain: Enolase (431 aa).

Glutamine 163 is a (2R)-2-phosphoglycerate binding site. Glutamate 205 serves as the catalytic Proton donor. Positions 242, 288, and 315 each coordinate Mg(2+). Residues lysine 340, arginine 369, serine 370, and lysine 391 each coordinate (2R)-2-phosphoglycerate. The active-site Proton acceptor is lysine 340.

It belongs to the enolase family. It depends on Mg(2+) as a cofactor.

The protein resides in the cytoplasm. Its subcellular location is the secreted. It is found in the cell surface. It catalyses the reaction (2R)-2-phosphoglycerate = phosphoenolpyruvate + H2O. It functions in the pathway carbohydrate degradation; glycolysis; pyruvate from D-glyceraldehyde 3-phosphate: step 4/5. Its function is as follows. Catalyzes the reversible conversion of 2-phosphoglycerate (2-PG) into phosphoenolpyruvate (PEP). It is essential for the degradation of carbohydrates via glycolysis. The sequence is that of Enolase from Bacillus anthracis (strain A0248).